The primary structure comprises 99 residues: Nucleoid-associated protein UUR10_0100 (99 aa).

Belongs to the YbaB/EbfC family. Homodimer.

It localises to the cytoplasm. The protein resides in the nucleoid. Its function is as follows. Binds to DNA and alters its conformation. May be involved in regulation of gene expression, nucleoid organization and DNA protection. This Ureaplasma urealyticum serovar 10 (strain ATCC 33699 / Western) protein is Nucleoid-associated protein UUR10_0100.